The following is a 454-amino-acid chain: GTPase Der (454 aa).

EngA-type G domains follow at residues 4–167 and 188–363; these read AIVA…SEDK and LQLA…ASWQ. Residues 10 to 17, 56 to 60, 121 to 124, 194 to 201, 241 to 245, and 306 to 309 contribute to the GTP site; these read GKPNVGKS, DTPGL, NKTE, GRPNCGKS, DTAGV, and NKCD. Residues 364–450 enclose the KH-like domain; sequence KRVTTGTLNQ…PVRLSFVKGK (87 aa).

Belongs to the TRAFAC class TrmE-Era-EngA-EngB-Septin-like GTPase superfamily. EngA (Der) GTPase family. As to quaternary structure, associates with the 50S ribosomal subunit.

GTPase that plays an essential role in the late steps of ribosome biogenesis. This Orientia tsutsugamushi (strain Boryong) (Rickettsia tsutsugamushi) protein is GTPase Der.